A 120-amino-acid polypeptide reads, in one-letter code: MAQNVEQQVAQLQQLQQQLSSIVAQKQQLELQLREIERALKELDEIEEDTKVYKTVGGLLIEADRDEVKEELEDRKETLELRVKTLEKQEKRLQQQIENLQKRLQKALQQAEGGGGAGAA.

This sequence belongs to the prefoldin subunit beta family. In terms of assembly, heterohexamer of two alpha and four beta subunits.

The protein resides in the cytoplasm. In terms of biological role, molecular chaperone capable of stabilizing a range of proteins. Seems to fulfill an ATP-independent, HSP70-like function in archaeal de novo protein folding. The protein is Prefoldin subunit beta (pfdB) of Methanopyrus kandleri (strain AV19 / DSM 6324 / JCM 9639 / NBRC 100938).